A 421-amino-acid polypeptide reads, in one-letter code: Early growth response protein 2 (421 aa).

Positions 127–145 (CSSTSSSNASSGSPNLSCS) are enriched in low complexity. 3 disordered regions span residues 127–152 (CSST…PQSD), 179–200 (SPTA…ASDG), and 223–288 (SDRK…ERPY). Positions 236 to 247 (PLSTIRNFTLGG) are enriched in polar residues. 3 C2H2-type zinc fingers span residues 288–312 (YPCP…IRIH), 318–340 (FQCR…IRTH), and 346–368 (FACD…TKIH).

It belongs to the EGR C2H2-type zinc-finger protein family.

Its subcellular location is the nucleus. Sequence-specific DNA-binding transcription factor. This Xenopus laevis (African clawed frog) protein is Early growth response protein 2 (egr2).